We begin with the raw amino-acid sequence, 228 residues long: Probable octanoyltransferase (228 aa).

A BPL/LPL catalytic domain is found at 27–198 (SGGDDAFILV…AFEEVFEAKV (172 aa)). Substrate-binding positions include 65 to 72 (RGGDATYH), 129 to 131 (SIG), and 142 to 144 (GVA). The active-site Acyl-thioester intermediate is the C160.

This sequence belongs to the LipB family.

It is found in the cytoplasm. The enzyme catalyses octanoyl-[ACP] + L-lysyl-[protein] = N(6)-octanoyl-L-lysyl-[protein] + holo-[ACP] + H(+). Its pathway is protein modification; protein lipoylation via endogenous pathway; protein N(6)-(lipoyl)lysine from octanoyl-[acyl-carrier-protein]: step 1/2. Functionally, catalyzes the transfer of endogenously produced octanoic acid from octanoyl-acyl-carrier-protein onto the lipoyl domains of lipoate-dependent enzymes. Lipoyl-ACP can also act as a substrate although octanoyl-ACP is likely to be the physiological substrate. The chain is Probable octanoyltransferase from Pyrobaculum calidifontis (strain DSM 21063 / JCM 11548 / VA1).